A 575-amino-acid chain; its full sequence is Urease subunit alpha (575 aa).

The Urease domain maps to 138–575; the sequence is GAVDCHVHLI…LPMTQRYFLF (438 aa). Ni(2+)-binding residues include His143, His145, and Lys226. N6-carboxylysine is present on Lys226. His228 serves as a coordination point for substrate. His255 and His281 together coordinate Ni(2+). His329 (proton donor) is an active-site residue. A Ni(2+)-binding site is contributed by Asp369.

This sequence belongs to the metallo-dependent hydrolases superfamily. Urease alpha subunit family. Heterotrimer of UreA (gamma), UreB (beta) and UreC (alpha) subunits. Three heterotrimers associate to form the active enzyme. Ni cation is required as a cofactor. Carboxylation allows a single lysine to coordinate two nickel ions.

It is found in the cytoplasm. The catalysed reaction is urea + 2 H2O + H(+) = hydrogencarbonate + 2 NH4(+). Its pathway is nitrogen metabolism; urea degradation; CO(2) and NH(3) from urea (urease route): step 1/1. This chain is Urease subunit alpha, found in Frankia casuarinae (strain DSM 45818 / CECT 9043 / HFP020203 / CcI3).